We begin with the raw amino-acid sequence, 393 residues long: MLRFQTAGESHGEALVATLTGVPAGLPIDQAFLDRELWRRQQGFGRGGRMKIERDTAHILSGVHHGKTIGSPIAILIRNNDWKNWQESLPVEEGDSAKHKPVKSPRPGHADLAGALKYNFPEARYVLERASARETTARVAAGAIAKLLLRQIGADVLSHVIAVGTARLENTEVQWEKLVELAQRDNVLLGCVDPEAEQRMKEQVDQVLRTGDTVGGVFEVVAHNLPPGLGTYVEWDRRLDGLLAMAVMSLQAVKAVEIGEGVSVAATFGSGAQDEIGYEREHESKFTGFTRTSNHAGGIEGGVSNGQDILVRGYLKPISTLRRPLGSVDFATREPLKAAYERSDVCVVPAAGIAAEAMVAITLAGCALEKFGGDSLVEFKRNYEGYCQQLQSF.

Arginine 40 and arginine 46 together coordinate NADP(+). Residues arginine 129 to serine 131, glutamine 251 to alanine 252, glycine 301, lysine 316 to threonine 320, and arginine 342 contribute to the FMN site.

This sequence belongs to the chorismate synthase family. Homotetramer. It depends on FMNH2 as a cofactor.

It carries out the reaction 5-O-(1-carboxyvinyl)-3-phosphoshikimate = chorismate + phosphate. It participates in metabolic intermediate biosynthesis; chorismate biosynthesis; chorismate from D-erythrose 4-phosphate and phosphoenolpyruvate: step 7/7. In terms of biological role, catalyzes the anti-1,4-elimination of the C-3 phosphate and the C-6 proR hydrogen from 5-enolpyruvylshikimate-3-phosphate (EPSP) to yield chorismate, which is the branch point compound that serves as the starting substrate for the three terminal pathways of aromatic amino acid biosynthesis. This reaction introduces a second double bond into the aromatic ring system. The protein is Chorismate synthase of Koribacter versatilis (strain Ellin345).